Consider the following 141-residue polypeptide: Hemoglobin subunit alpha (141 aa).

The Globin domain maps to 1–141 (VLSPADKSNV…VSTVLVSKYR (141 aa)). Ser-3 carries the post-translational modification Phosphoserine. Residues Lys-7 and Lys-11 each carry the N6-succinyllysine modification. Lys-16 is modified (N6-acetyllysine; alternate). An N6-succinyllysine; alternate modification is found at Lys-16. Tyr-24 carries the phosphotyrosine modification. Ser-35 is modified (phosphoserine). Position 40 is an N6-succinyllysine (Lys-40). Ser-49 bears the Phosphoserine mark. His-58 lines the O2 pocket. Residue His-87 participates in heme b binding. Ser-102 carries the post-translational modification Phosphoserine. Position 108 is a phosphothreonine (Thr-108). Ser-124 carries the post-translational modification Phosphoserine. Position 134 is a phosphothreonine (Thr-134). Ser-138 bears the Phosphoserine mark.

Belongs to the globin family. As to quaternary structure, heterotetramer of two alpha chains and two beta chains. In terms of tissue distribution, red blood cells.

In terms of biological role, involved in oxygen transport from the lung to the various peripheral tissues. Its function is as follows. Hemopressin acts as an antagonist peptide of the cannabinoid receptor CNR1. Hemopressin-binding efficiently blocks cannabinoid receptor CNR1 and subsequent signaling. The protein is Hemoglobin subunit alpha (HBA) of Chalinolobus morio (Chocolate-wattled bat).